The primary structure comprises 507 residues: Capsid vertex component 1 (507 aa).

The segment at 219–257 (AAAETSVSKHHPALENPSNIRGSAGGEGGGGRAGTGGTV) is disordered. Over residues 241 to 257 (SAGGEGGGGRAGTGGTV) the composition is skewed to gly residues.

This sequence belongs to the herpesviridae CVC1 protein family. As to quaternary structure, interacts (via C-terminus) with capsid vertex component 2/CVC2.

It is found in the virion. The protein localises to the host nucleus. Capsid vertex-specific component that plays a role during viral DNA encapsidation, assuring correct genome cleavage and presumably stabilizing capsids that contain full-length viral genomes. The chain is Capsid vertex component 1 from Epstein-Barr virus (strain B95-8) (HHV-4).